A 427-amino-acid polypeptide reads, in one-letter code: Tegument protein VP16 homolog (427 aa).

This sequence belongs to the herpesviridae tegument protein VP16 protein family.

It is found in the virion tegument. It localises to the host nucleus. Functionally, transcriptional activator of immediate-early (IE) gene products (alpha genes). Acts as a key activator of lytic infection by initiating the lytic program through the assembly of the transcriptional regulatory VP16-induced complex composed of VP16 and two cellular factors, HCFC1 and POU2F1. VP16-induced complex represents a regulatory switch: when it is on, it promotes IE-gene expression and thus lytic infection, and when it is off, it limits IE-gene transcription favoring latent infection. In terms of biological role, may play a role in the aggregation of tegument proteins around nucleocapsids during virus morphogenesis. The sequence is that of Tegument protein VP16 homolog (MDV061) from Gallus gallus (Chicken).